We begin with the raw amino-acid sequence, 109 residues long: Parvalbumin alpha (109 aa).

EF-hand domains follow at residues 38–73 (KTDAQVKEVFEILDKDQSGFIEEEELKGVLKGFSAH) and 77–109 (LNDTETKALLAAGDSDHDGKIGADEFAKMVAQA). Ca(2+) is bound by residues Asp51, Asp53, Ser55, Glu62, Asp90, Asp92, Asp94, Lys96, and Glu101.

It belongs to the parvalbumin family.

Functionally, in muscle, parvalbumin is thought to be involved in relaxation after contraction. It binds two calcium ions. This is Parvalbumin alpha from Triakis semifasciata (Leopard shark).